Consider the following 333-residue polypeptide: Dioxygenase cnsJ (333 aa).

Fe cation-binding residues include histidine 153, aspartate 155, and histidine 235. The disordered stretch occupies residues asparagine 309 to isoleucine 333. The span at asparagine 323–isoleucine 333 shows a compositional bias: basic and acidic residues.

This sequence belongs to the PhyH family. As to quaternary structure, homodimer. Fe cation serves as cofactor.

Its pathway is alkaloid biosynthesis. Dioxygenase; part of the gene cluster that mediates the biosynthesis of communesins, a prominent class of indole alkaloids with great potential as pharmaceuticals. Communesins are biosynthesized by the coupling of tryptamine and aurantioclavine, two building blocks derived from L-tryptophan. The L-tryptophan decarboxylase cnsB converts L-tryptophan to tryptamine, whereas the tryptophan dimethylallyltransferase cnsF converts L-tryptophan to 4-dimethylallyl tryptophan which is further transformed to aurantioclavine by the aurantioclavine synthase cnsA, probably aided by the catalase cnsD. The cytochrome P450 monooxygenase cnsC catalyzes the heterodimeric coupling between the two different indole moieties, tryptamine and aurantioclavine, to construct vicinal quaternary stereocenters and yield the heptacyclic communesin scaffold. The O-methyltransferase cnsE then methylates the communesin scaffold to produce communesin K, the simplest characterized communesin that contains the heptacyclic core. The dioxygenase cnsJ converts communesin K into communesin I. Acylation to introduce the hexadienyl group at position N16 of communesin I by the acyltransferase cnsK leads to the production of communesin B. The hexadienyl group is produced by the highly reducing polyketide synthase cnsI, before being hydrolytically removed from cnsI by the serine hydrolase cnsH, converted into hexadienyl-CoA by the CoA ligase cnsG, and then transferred to communesin I by cnsK. Surprisingly, cnsK may also be a promiscuous acyltransferase that can tolerate a range of acyl groups, including acetyl-, propionyl-, and butyryl-CoA, which lead to communesins A, G and H respectively. The roles of the alpha-ketoglutarate-dependent dioxygenases cnsM and cnsP have still to be determined. The protein is Dioxygenase cnsJ of Penicillium expansum (Blue mold rot fungus).